Reading from the N-terminus, the 215-residue chain is Ribulose-phosphate 3-epimerase (215 aa).

S13 contributes to the substrate binding site. 4 residues coordinate a divalent metal cation: H38, D40, H69, and D175. Catalysis depends on D40, which acts as the Proton acceptor. Substrate is bound by residues H69, D175–G177, and G196–S197. The active-site Proton donor is the D175.

The protein belongs to the ribulose-phosphate 3-epimerase family. It depends on a divalent metal cation as a cofactor.

It carries out the reaction D-ribulose 5-phosphate = D-xylulose 5-phosphate. The protein operates within carbohydrate degradation. Functionally, catalyzes the reversible epimerization of D-ribulose 5-phosphate to D-xylulose 5-phosphate. This is Ribulose-phosphate 3-epimerase from Mycoplasma pneumoniae (strain ATCC 29342 / M129 / Subtype 1) (Mycoplasmoides pneumoniae).